Reading from the N-terminus, the 49-residue chain is Large ribosomal subunit protein bL36 (49 aa).

It belongs to the bacterial ribosomal protein bL36 family.

The protein is Large ribosomal subunit protein bL36 of Delftia acidovorans (strain DSM 14801 / SPH-1).